The chain runs to 442 residues: 3-phosphoshikimate 1-carboxyvinyltransferase (442 aa).

3 residues coordinate 3-phosphoshikimate: Lys27, Ser28, and Arg32. Lys27 is a phosphoenolpyruvate binding site. Positions 100 and 128 each coordinate phosphoenolpyruvate. 3-phosphoshikimate-binding residues include Ser174, Ser175, Gln176, Ser204, Asp321, and Lys348. Residue Gln176 participates in phosphoenolpyruvate binding. The Proton acceptor role is filled by Asp321. Residues Arg352, Arg394, and Lys424 each contribute to the phosphoenolpyruvate site.

Belongs to the EPSP synthase family. In terms of assembly, monomer.

It localises to the cytoplasm. It catalyses the reaction 3-phosphoshikimate + phosphoenolpyruvate = 5-O-(1-carboxyvinyl)-3-phosphoshikimate + phosphate. It functions in the pathway metabolic intermediate biosynthesis; chorismate biosynthesis; chorismate from D-erythrose 4-phosphate and phosphoenolpyruvate: step 6/7. Catalyzes the transfer of the enolpyruvyl moiety of phosphoenolpyruvate (PEP) to the 5-hydroxyl of shikimate-3-phosphate (S3P) to produce enolpyruvyl shikimate-3-phosphate and inorganic phosphate. The chain is 3-phosphoshikimate 1-carboxyvinyltransferase from Herminiimonas arsenicoxydans.